Here is a 178-residue protein sequence, read N- to C-terminus: Large ribosomal subunit protein uL6 (178 aa).

Belongs to the universal ribosomal protein uL6 family. In terms of assembly, part of the 50S ribosomal subunit.

In terms of biological role, this protein binds to the 23S rRNA, and is important in its secondary structure. It is located near the subunit interface in the base of the L7/L12 stalk, and near the tRNA binding site of the peptidyltransferase center. The chain is Large ribosomal subunit protein uL6 from Streptococcus gordonii (strain Challis / ATCC 35105 / BCRC 15272 / CH1 / DL1 / V288).